The sequence spans 125 residues: Large ribosomal subunit protein bL12 (125 aa).

It belongs to the bacterial ribosomal protein bL12 family. As to quaternary structure, homodimer. Part of the ribosomal stalk of the 50S ribosomal subunit. Forms a multimeric L10(L12)X complex, where L10 forms an elongated spine to which 2 to 4 L12 dimers bind in a sequential fashion. Binds GTP-bound translation factors.

Functionally, forms part of the ribosomal stalk which helps the ribosome interact with GTP-bound translation factors. Is thus essential for accurate translation. The chain is Large ribosomal subunit protein bL12 from Paraburkholderia phymatum (strain DSM 17167 / CIP 108236 / LMG 21445 / STM815) (Burkholderia phymatum).